The primary structure comprises 321 residues: MKDLPARRLLLVHAHPDDESINNGATMARYAAEGAHVTLVTCTLGEEGEVIPPALARLTADRDDALGPHRVGELAAAMRELGVDDHRFLGGAGRYRDSGMMGAEQNGRPGSFWSTSVDEAAAHLVEVIREVRPQVLVTYDPDGGYGHPDHIQAHRVAMRAADLAADPAYGSDAPHTVAKVYWNRVERAAAEAGFERLRTTAPGAFPGIASVDDVPGVTDREHITAEIDGSAYAGAKSAAMRAHATQIAVDGPFFALSNDLGQPLLTTECYQLVRGVPGVPEGERESDLFAGLPPATDGTGAAGAPSATGAANPADAEGGAA.

The Zn(2+) site is built by His-15, Asp-18, and His-150. The interval 280–321 is disordered; that stretch reads PEGERESDLFAGLPPATDGTGAAGAPSATGAANPADAEGGAA. Residues 290-321 are compositionally biased toward low complexity; the sequence is AGLPPATDGTGAAGAPSATGAANPADAEGGAA.

The protein belongs to the MshB deacetylase family. Requires Zn(2+) as cofactor.

The enzyme catalyses 1D-myo-inositol 2-acetamido-2-deoxy-alpha-D-glucopyranoside + H2O = 1D-myo-inositol 2-amino-2-deoxy-alpha-D-glucopyranoside + acetate. Catalyzes the deacetylation of 1D-myo-inositol 2-acetamido-2-deoxy-alpha-D-glucopyranoside (GlcNAc-Ins) in the mycothiol biosynthesis pathway. The protein is 1D-myo-inositol 2-acetamido-2-deoxy-alpha-D-glucopyranoside deacetylase of Streptomyces griseus subsp. griseus (strain JCM 4626 / CBS 651.72 / NBRC 13350 / KCC S-0626 / ISP 5235).